Consider the following 107-residue polypeptide: Nucleoid-associated protein CE0210 (107 aa).

It belongs to the YbaB/EbfC family. In terms of assembly, homodimer.

Its subcellular location is the cytoplasm. It is found in the nucleoid. In terms of biological role, binds to DNA and alters its conformation. May be involved in regulation of gene expression, nucleoid organization and DNA protection. This chain is Nucleoid-associated protein CE0210, found in Corynebacterium efficiens (strain DSM 44549 / YS-314 / AJ 12310 / JCM 11189 / NBRC 100395).